Here is a 470-residue protein sequence, read N- to C-terminus: Diaminobutyrate--2-oxoglutarate aminotransferase (470 aa).

Lysine 304 is modified (N6-(pyridoxal phosphate)lysine).

This sequence belongs to the class-III pyridoxal-phosphate-dependent aminotransferase family. It depends on pyridoxal 5'-phosphate as a cofactor.

It carries out the reaction L-2,4-diaminobutanoate + 2-oxoglutarate = L-aspartate 4-semialdehyde + L-glutamate. Its pathway is siderophore biosynthesis; rhizobactin biosynthesis. The polypeptide is Diaminobutyrate--2-oxoglutarate aminotransferase (rhbA) (Rhizobium meliloti (strain 1021) (Ensifer meliloti)).